We begin with the raw amino-acid sequence, 662 residues long: Serine/threonine kinase-like domain-containing protein STKLD1 (662 aa).

Residues 1–202 form the Protein kinase domain; it reads MLNPGALGVN…ILDMATCSFL (202 aa). ATP contacts are provided by residues 2 to 10 and K25; that span reads LNPGALGVN. A disordered region spans residues 639–662; it reads LQEDQLEPPAGQEAPLQGEPLFRP.

The protein belongs to the protein kinase superfamily. Ser/Thr protein kinase family. STKL subfamily.

The protein is Serine/threonine kinase-like domain-containing protein STKLD1 (Stkld1) of Mus musculus (Mouse).